The sequence spans 249 residues: Aliphatic sulfonates import ATP-binding protein SsuB 2 (249 aa).

Positions 5-233 (LDLLEIRKAY…PRDRRAVELA (229 aa)) constitute an ABC transporter domain. Residue 37–44 (GPSGCGKS) coordinates ATP.

Belongs to the ABC transporter superfamily. Aliphatic sulfonates importer (TC 3.A.1.17.2) family. In terms of assembly, the complex is composed of two ATP-binding proteins (SsuB), two transmembrane proteins (SsuC) and a solute-binding protein (SsuA).

Its subcellular location is the cell inner membrane. The catalysed reaction is ATP + H2O + aliphatic sulfonate-[sulfonate-binding protein]Side 1 = ADP + phosphate + aliphatic sulfonateSide 2 + [sulfonate-binding protein]Side 1.. In terms of biological role, part of the ABC transporter complex SsuABC involved in aliphatic sulfonates import. Responsible for energy coupling to the transport system. In Pseudomonas aeruginosa (strain ATCC 15692 / DSM 22644 / CIP 104116 / JCM 14847 / LMG 12228 / 1C / PRS 101 / PAO1), this protein is Aliphatic sulfonates import ATP-binding protein SsuB 2.